The following is a 526-amino-acid chain: Anthranilate synthase component 1 (526 aa).

Residues Ser40 and Pro304–Met306 each bind L-tryptophan. Gly341–Thr342 contacts chorismate. Residue Glu374 participates in Mg(2+) binding. Residues Tyr461, Arg481, Gly495 to Gly497, and Gly497 contribute to the chorismate site. A Mg(2+)-binding site is contributed by Glu510.

It belongs to the anthranilate synthase component I family. In terms of assembly, heterotetramer consisting of two non-identical subunits: a beta subunit (TrpG) and a large alpha subunit (TrpE). It depends on Mg(2+) as a cofactor.

It carries out the reaction chorismate + L-glutamine = anthranilate + pyruvate + L-glutamate + H(+). It functions in the pathway amino-acid biosynthesis; L-tryptophan biosynthesis; L-tryptophan from chorismate: step 1/5. Feedback inhibited by tryptophan. In terms of biological role, part of a heterotetrameric complex that catalyzes the two-step biosynthesis of anthranilate, an intermediate in the biosynthesis of L-tryptophan. In the first step, the glutamine-binding beta subunit (TrpG) of anthranilate synthase (AS) provides the glutamine amidotransferase activity which generates ammonia as a substrate that, along with chorismate, is used in the second step, catalyzed by the large alpha subunit of AS (TrpE) to produce anthranilate. In the absence of TrpG, TrpE can synthesize anthranilate directly from chorismate and high concentrations of ammonia. This chain is Anthranilate synthase component 1 (trpE), found in Buchnera aphidicola subsp. Tetraneura caerulescens.